The primary structure comprises 94 residues: Aspartyl/glutamyl-tRNA(Asn/Gln) amidotransferase subunit C (94 aa).

Belongs to the GatC family. In terms of assembly, heterotrimer of A, B and C subunits.

The catalysed reaction is L-glutamyl-tRNA(Gln) + L-glutamine + ATP + H2O = L-glutaminyl-tRNA(Gln) + L-glutamate + ADP + phosphate + H(+). It carries out the reaction L-aspartyl-tRNA(Asn) + L-glutamine + ATP + H2O = L-asparaginyl-tRNA(Asn) + L-glutamate + ADP + phosphate + 2 H(+). Functionally, allows the formation of correctly charged Asn-tRNA(Asn) or Gln-tRNA(Gln) through the transamidation of misacylated Asp-tRNA(Asn) or Glu-tRNA(Gln) in organisms which lack either or both of asparaginyl-tRNA or glutaminyl-tRNA synthetases. The reaction takes place in the presence of glutamine and ATP through an activated phospho-Asp-tRNA(Asn) or phospho-Glu-tRNA(Gln). The chain is Aspartyl/glutamyl-tRNA(Asn/Gln) amidotransferase subunit C from Caldicellulosiruptor saccharolyticus (strain ATCC 43494 / DSM 8903 / Tp8T 6331).